Here is a 353-residue protein sequence, read N- to C-terminus: tRNA-cytidine(32) 2-sulfurtransferase (353 aa).

A PP-loop motif motif is present at residues 49-54 (SGGKDS). C124, C127, and C215 together coordinate [4Fe-4S] cluster.

The protein belongs to the TtcA family. Homodimer. It depends on Mg(2+) as a cofactor. Requires [4Fe-4S] cluster as cofactor.

The protein resides in the cytoplasm. The enzyme catalyses cytidine(32) in tRNA + S-sulfanyl-L-cysteinyl-[cysteine desulfurase] + AH2 + ATP = 2-thiocytidine(32) in tRNA + L-cysteinyl-[cysteine desulfurase] + A + AMP + diphosphate + H(+). It participates in tRNA modification. Catalyzes the ATP-dependent 2-thiolation of cytidine in position 32 of tRNA, to form 2-thiocytidine (s(2)C32). The sulfur atoms are provided by the cysteine/cysteine desulfurase (IscS) system. In Sodalis glossinidius (strain morsitans), this protein is tRNA-cytidine(32) 2-sulfurtransferase.